The sequence spans 146 residues: Ecotin-like protein 1 (146 aa).

This sequence belongs to the protease inhibitor I11 (ecotin) family.

The chain is Ecotin-like protein 1 (ISP1) from Leishmania infantum.